We begin with the raw amino-acid sequence, 364 residues long: Fructose-1,6-bisphosphatase class 1 2 (364 aa).

E101, D123, L125, and D126 together coordinate Mg(2+). Residues 126 to 129 (DGSS) and N218 contribute to the substrate site. E290 contributes to the Mg(2+) binding site.

The protein belongs to the FBPase class 1 family. In terms of assembly, homotetramer. It depends on Mg(2+) as a cofactor.

It is found in the cytoplasm. It catalyses the reaction beta-D-fructose 1,6-bisphosphate + H2O = beta-D-fructose 6-phosphate + phosphate. It functions in the pathway carbohydrate biosynthesis; gluconeogenesis. This is Fructose-1,6-bisphosphatase class 1 2 from Cupriavidus taiwanensis (strain DSM 17343 / BCRC 17206 / CCUG 44338 / CIP 107171 / LMG 19424 / R1) (Ralstonia taiwanensis (strain LMG 19424)).